The primary structure comprises 647 residues: Threonine--tRNA ligase (647 aa).

Residues 1 to 61 (MIKITFPDGA…EEDGSIEIVT (61 aa)) form the TGS domain. The segment at 240 to 538 (DHRKLGKELD…LIETYKGAFP (299 aa)) is catalytic. Cys334, His385, and His515 together coordinate Zn(2+).

Belongs to the class-II aminoacyl-tRNA synthetase family. In terms of assembly, homodimer. Zn(2+) serves as cofactor.

The protein resides in the cytoplasm. It catalyses the reaction tRNA(Thr) + L-threonine + ATP = L-threonyl-tRNA(Thr) + AMP + diphosphate + H(+). Its function is as follows. Catalyzes the attachment of threonine to tRNA(Thr) in a two-step reaction: L-threonine is first activated by ATP to form Thr-AMP and then transferred to the acceptor end of tRNA(Thr). Also edits incorrectly charged L-seryl-tRNA(Thr). The polypeptide is Threonine--tRNA ligase (Streptococcus pyogenes serotype M4 (strain MGAS10750)).